A 111-amino-acid polypeptide reads, in one-letter code: Nucleoid-associated protein Fphi_0115 (111 aa).

Residues 1-27 form a disordered region; the sequence is MNFDMSKLMQQAQKMQEQMKKAQQERE. The segment covering 17 to 27 has biased composition (basic and acidic residues); sequence EQMKKAQQERE.

This sequence belongs to the YbaB/EbfC family. As to quaternary structure, homodimer.

It is found in the cytoplasm. The protein resides in the nucleoid. Its function is as follows. Binds to DNA and alters its conformation. May be involved in regulation of gene expression, nucleoid organization and DNA protection. The polypeptide is Nucleoid-associated protein Fphi_0115 (Francisella philomiragia subsp. philomiragia (strain ATCC 25017 / CCUG 19701 / FSC 153 / O#319-036)).